The primary structure comprises 76 residues: Putative small nuclear ribonucleoprotein G-like protein 15 (76 aa).

Residues 4–76 (AHPPELKKFT…IIMLEALERV (73 aa)) form the Sm domain.

It belongs to the snRNP Sm proteins family.

It is found in the nucleus. In terms of biological role, associated with snRNP U1, U2, U4/U6 and U5. The protein is Putative small nuclear ribonucleoprotein G-like protein 15 (SNRPGP15) of Homo sapiens (Human).